The primary structure comprises 455 residues: Ribulose bisphosphate carboxylase large chain (455 aa).

Lys-5 carries the post-translational modification N6,N6,N6-trimethyllysine. Substrate contacts are provided by Asn-114 and Thr-164. Lys-166 functions as the Proton acceptor in the catalytic mechanism. A substrate-binding site is contributed by Lys-168. Residues Lys-192, Asp-194, and Glu-195 each coordinate Mg(2+). Lys-192 is subject to N6-carboxylysine. Catalysis depends on His-285, which acts as the Proton acceptor. Residues Arg-286, His-318, and Ser-370 each coordinate substrate.

It belongs to the RuBisCO large chain family. Type I subfamily. In terms of assembly, heterohexadecamer of 8 large chains and 8 small chains; disulfide-linked. The disulfide link is formed within the large subunit homodimers. Requires Mg(2+) as cofactor. Post-translationally, the disulfide bond which can form in the large chain dimeric partners within the hexadecamer appears to be associated with oxidative stress and protein turnover.

It localises to the plastid. It is found in the chloroplast. The enzyme catalyses 2 (2R)-3-phosphoglycerate + 2 H(+) = D-ribulose 1,5-bisphosphate + CO2 + H2O. It catalyses the reaction D-ribulose 1,5-bisphosphate + O2 = 2-phosphoglycolate + (2R)-3-phosphoglycerate + 2 H(+). RuBisCO catalyzes two reactions: the carboxylation of D-ribulose 1,5-bisphosphate, the primary event in carbon dioxide fixation, as well as the oxidative fragmentation of the pentose substrate in the photorespiration process. Both reactions occur simultaneously and in competition at the same active site. The chain is Ribulose bisphosphate carboxylase large chain from Lupinus microcarpus (Chick lupine).